Reading from the N-terminus, the 460-residue chain is Putative movement protein (460 aa).

Disordered regions lie at residues 267–314 (SGSK…SDFE) and 349–460 (RQNQ…PSGL). Residues 368-379 (RKSKGISGRRKQ) show a composition bias toward basic residues.

This sequence belongs to the tobamoviruses movement protein family.

Suppressor of viral-induced RNA silencing. The protein is Putative movement protein of Crataegus (hawthorn).